We begin with the raw amino-acid sequence, 212 residues long: Large ribosomal subunit protein uL4 (212 aa).

Residues arginine 45–glycine 71 form a disordered region. The segment covering glycine 60 to glycine 71 has biased composition (basic residues).

Belongs to the universal ribosomal protein uL4 family. In terms of assembly, part of the 50S ribosomal subunit.

Its function is as follows. One of the primary rRNA binding proteins, this protein initially binds near the 5'-end of the 23S rRNA. It is important during the early stages of 50S assembly. It makes multiple contacts with different domains of the 23S rRNA in the assembled 50S subunit and ribosome. Forms part of the polypeptide exit tunnel. The chain is Large ribosomal subunit protein uL4 from Nostoc punctiforme (strain ATCC 29133 / PCC 73102).